A 548-amino-acid chain; its full sequence is Sulochrin halogenase gedL (548 aa).

Residues glycine 14, alanine 17, and glutamate 47 each contribute to the FAD site. Serine 333 and glycine 334 together coordinate chloride. Valine 335 provides a ligand contact to FAD.

This sequence belongs to the flavin-dependent halogenase family.

It carries out the reaction sulochrin + 2 FADH2 + 2 chloride + 2 O2 = dihydrogeodin + 2 FAD + 4 H2O + H(+). It functions in the pathway secondary metabolite biosynthesis. In terms of biological role, sulochrin halogenase; part of the gene cluster that mediates the biosynthesis of geodin, an intermediate in the biosynthesis of other natural products. The pathway begins with the synthesis of atrochrysone thioester by the polyketide synthase (PKS) gedC. The atrochrysone carboxyl ACP thioesterase gedB then breaks the thioester bond and releases the atrochrysone carboxylic acid from gedC. The atrochrysone carboxylic acid is then converted to atrochrysone which is further transformed into emodinanthrone. The next step is performed by the emodinanthrone oxygenase gedH that catalyzes the oxidation of emodinanthrone to emodin. Emodin O-methyltransferase encoded probably by gedA then catalyzes methylation of the 8-hydroxy group of emodin to form questin. Ring cleavage of questin by questin oxidase gedK leads to desmethylsulochrin via several intermediates including questin epoxide. Another methylation step probably catalyzed by methyltransferase gedG leads to the formation of sulochrin which is further converted to dihydrogeodin by the sulochrin halogenase gedL. Finally, the dihydrogeodin oxidase gedJ catalyzes the stereospecific phenol oxidative coupling reaction converting dihydrogeodin to geodin. In Aspergillus terreus (strain NIH 2624 / FGSC A1156), this protein is Sulochrin halogenase gedL.